A 963-amino-acid chain; its full sequence is Protein bicaudal C homolog 1-A (963 aa).

Residues 1 to 48 (MAAQCESIGGDMNQSDPGSNSERSADSPVPGSEDDSPHDPEWREERFR) form a disordered region. Polar residues predominate over residues 12 to 22 (MNQSDPGSNSE). Basic and acidic residues predominate over residues 35–48 (DSPHDPEWREERFR). KH domains are found at residues 128 to 195 (RVTL…RVRI) and 280 to 344 (PVST…RQYL). A compositionally biased stretch (polar residues) spans 592-601 (EASRQSNNHS). Disordered stretches follow at residues 592-613 (EASR…TDPE), 668-713 (ERLL…TSQS), and 767-834 (LRRA…NKSA). Composition is skewed to basic and acidic residues over residues 602–612 (SAEEVNSKTDP) and 683–696 (VTDK…RAAE). The span at 784 to 797 (ENSSLSRSNSREQL) shows a compositional bias: low complexity. Polar residues predominate over residues 812-824 (IDSSQNDYSSSIG). Residues 862–925 (FKGSDLPELF…LLAISELNKN (64 aa)) form the SAM domain.

Belongs to the BicC family.

Functionally, putative RNA-binding protein. May be involved in regulating gene expression during embryonic development. Seems to be involved in endoderm formation. Ectopic expression results in endoderm formation in the absence of mesoderm induction. This chain is Protein bicaudal C homolog 1-A (bicc1-a), found in Xenopus laevis (African clawed frog).